Consider the following 148-residue polypeptide: Glutamyl-tRNA(Gln) amidotransferase subunit C, mitochondrial (148 aa).

Belongs to the GatC family. As to quaternary structure, subunit of the heterotrimeric GatCAB amidotransferase (AdT) complex, composed of A, B and C subunits.

Its subcellular location is the mitochondrion. The enzyme catalyses L-glutamyl-tRNA(Gln) + L-glutamine + ATP + H2O = L-glutaminyl-tRNA(Gln) + L-glutamate + ADP + phosphate + H(+). Allows the formation of correctly charged Gln-tRNA(Gln) through the transamidation of misacylated Glu-tRNA(Gln) in the mitochondria. The reaction takes place in the presence of glutamine and ATP through an activated gamma-phospho-Glu-tRNA(Gln). This Drosophila sechellia (Fruit fly) protein is Glutamyl-tRNA(Gln) amidotransferase subunit C, mitochondrial.